The primary structure comprises 265 residues: uncharacterized protein (265 aa).

A disordered region spans residues 122–145 (THYRDNGQTPPRDTRPHGGISLGG).

This is an uncharacterized protein from Zymomonas mobilis subsp. mobilis (strain ATCC 31821 / ZM4 / CP4).